The primary structure comprises 721 residues: BRCA1-A complex subunit RAP80 (721 aa).

The disordered stretch occupies residues 1–65; the sequence is MPRRKKKGKE…GLQKTKIKQS (65 aa). The segment at 1 to 101 is necessary for transcriptional repression; the sequence is MPRRKKKGKE…SEQEAREVNS (101 aa). Lysine 20 participates in a covalent cross-link: Glycyl lysine isopeptide (Lys-Gly) (interchain with G-Cter in SUMO2). Serine 29 carries the phosphoserine modification. Lysine 31 is covalently cross-linked (Glycyl lysine isopeptide (Lys-Gly) (interchain with G-Cter in SUMO2)). Residues serine 44 and serine 46 each carry the phosphoserine modification. The LR motif motif lies at 60 to 78; sequence TKIKQSSRAKCLAKRKIAQ. Residues lysine 75 and lysine 90 each participate in a glycyl lysine isopeptide (Lys-Gly) (interchain with G-Cter in SUMO2) cross-link. A UIM 1 domain is found at 80-99; sequence TEEEQFALALKMSEQEAREV. The segment at 93 to 204 is disordered; the sequence is EQEAREVNSQ…SVSSGSWDQS (112 aa). Residues 97–103 are UIM-linker; it reads REVNSQE. The tract at residues 100 to 200 is necessary for interaction with NR6A1 N-terminus; the sequence is NSQEEEEEEL…EEPVSVSSGS (101 aa). Serine 101 is subject to Phosphoserine. A UIM 2 domain is found at 105-124; sequence EEEELLRKAIAESLNSCRPS. A compositionally biased stretch (polar residues) spans 117–130; the sequence is SLNSCRPSDASATR. Residue serine 140 is modified to Phosphoserine. Residues 194-204 show a composition bias toward low complexity; that stretch reads VSVSSGSWDQS. Position 205 is a phosphoserine (serine 205). Lysine 245 is covalently cross-linked (Glycyl lysine isopeptide (Lys-Gly) (interchain with G-Cter in SUMO2)). The interval 270-400 is AIR; that stretch reads TGGTVNYFWG…EEEPTTSHGQ (131 aa). The tract at residues 334–369 is disordered; the sequence is NECGQGEQASEKNEGISEDMGDEDKEERQESRASVW. A compositionally biased stretch (acidic residues) spans 349-358; sequence ISEDMGDEDK. Glycyl lysine isopeptide (Lys-Gly) (interchain with G-Cter in SUMO2) cross-links involve residues lysine 382 and lysine 387. The interval 391–418 is disordered; sequence EEEPTTSHGQSSQGLFVEETSEEGNSVP. The necessary for interaction with NR6A1 C-terminus stretch occupies residues 400 to 500; the sequence is QSSQGLFVEE…EIHTSTFSSS (101 aa). Serine 402 and serine 420 each carry phosphoserine. Lysine 429 is covalently cross-linked (Glycyl lysine isopeptide (Lys-Gly) (interchain with G-Cter in SUMO2)). Position 467 is a phosphoserine (serine 467). The segment at 502 to 529 adopts a UBZ4-type zinc-finger fold; that stretch reads QVSCPLCDQGFPPTKIERHAMYCNGLMG. Residues cysteine 505, cysteine 508, histidine 520, and cysteine 524 each coordinate Zn(2+). A zinc-finger-like region region spans residues 505–582; sequence CPLCDQGFPP…REYQCHVESC (78 aa). Glycyl lysine isopeptide (Lys-Gly) (interchain with G-Cter in SUMO2) cross-links involve residues lysine 544, lysine 559, lysine 562, and lysine 607. At serine 627 the chain carries Phosphoserine. Glycyl lysine isopeptide (Lys-Gly) (interchain with G-Cter in SUMO2) cross-links involve residues lysine 635 and lysine 642. Serine 655 and serine 679 each carry phosphoserine. Residues lysine 698 and lysine 699 each participate in a glycyl lysine isopeptide (Lys-Gly) (interchain with G-Cter in SUMO2) cross-link.

This sequence belongs to the RAP80 family. In terms of assembly, component of the ARISC complex, at least composed of UIMC1/RAP80, ABRAXAS1, BRCC3/BRCC36, BABAM2 and BABAM1/NBA1. Component of the BRCA1-A complex, at least composed of the BRCA1, BARD1, UIMC1/RAP80, ABRAXAS1, BRCC3/BRCC36, BABAM2 and BABAM1/NBA1. In the BRCA1-A complex, interacts directly with ABRAXAS1. Interacts with UBE2I. Interacts with NR6A1. Interacts with ESR1. Interacts with TSP57. Interacts with TRAIP. In terms of processing, sumoylated. Phosphorylated upon DNA damage by ATM or ATR.

It localises to the nucleus. Functionally, ubiquitin-binding protein. Specifically recognizes and binds 'Lys-63'-linked ubiquitin. Plays a central role in the BRCA1-A complex by specifically binding 'Lys-63'-linked ubiquitinated histones H2A and H2AX at DNA lesions sites, leading to target the BRCA1-BARD1 heterodimer to sites of DNA damage at double-strand breaks (DSBs). The BRCA1-A complex also possesses deubiquitinase activity that specifically removes 'Lys-63'-linked ubiquitin on histones H2A and H2AX. Also weakly binds monoubiquitin but with much less affinity than 'Lys-63'-linked ubiquitin. May interact with monoubiquitinated histones H2A and H2B; the relevance of such results is however unclear in vivo. Does not bind Lys-48'-linked ubiquitin. May indirectly act as a transcriptional repressor by inhibiting the interaction of NR6A1 with the corepressor NCOR1. This is BRCA1-A complex subunit RAP80 (UIMC1) from Sus scrofa (Pig).